The primary structure comprises 238 residues: Ribosomal RNA small subunit methyltransferase G (238 aa).

Residues glycine 77, phenylalanine 82, 128–129, and arginine 147 contribute to the S-adenosyl-L-methionine site; that span reads AE.

This sequence belongs to the methyltransferase superfamily. RNA methyltransferase RsmG family.

The protein resides in the cytoplasm. Specifically methylates the N7 position of guanine in position 535 of 16S rRNA. The sequence is that of Ribosomal RNA small subunit methyltransferase G from Listeria innocua serovar 6a (strain ATCC BAA-680 / CLIP 11262).